The chain runs to 151 residues: Small ribosomal subunit protein uS15z (151 aa).

This sequence belongs to the universal ribosomal protein uS15 family.

This Oryza sativa subsp. japonica (Rice) protein is Small ribosomal subunit protein uS15z.